A 126-amino-acid chain; its full sequence is Aspartate 1-decarboxylase (126 aa).

The active-site Schiff-base intermediate with substrate; via pyruvic acid is Ser25. Pyruvic acid (Ser) is present on Ser25. Thr57 contributes to the substrate binding site. The active-site Proton donor is the Tyr58. 73 to 75 contacts substrate; the sequence is GAA.

This sequence belongs to the PanD family. In terms of assembly, heterooctamer of four alpha and four beta subunits. Pyruvate is required as a cofactor. In terms of processing, is synthesized initially as an inactive proenzyme, which is activated by self-cleavage at a specific serine bond to produce a beta-subunit with a hydroxyl group at its C-terminus and an alpha-subunit with a pyruvoyl group at its N-terminus.

It is found in the cytoplasm. The enzyme catalyses L-aspartate + H(+) = beta-alanine + CO2. The protein operates within cofactor biosynthesis; (R)-pantothenate biosynthesis; beta-alanine from L-aspartate: step 1/1. Catalyzes the pyruvoyl-dependent decarboxylation of aspartate to produce beta-alanine. This is Aspartate 1-decarboxylase from Serratia proteamaculans (strain 568).